We begin with the raw amino-acid sequence, 217 residues long: Imidazole glycerol phosphate synthase subunit HisH (217 aa).

The region spanning 3–217 is the Glutamine amidotransferase type-1 domain; sequence SVAVIDYGMG…FLRWEPWSSR (215 aa). Cys-82 serves as the catalytic Nucleophile. Active-site residues include His-193 and Glu-195.

Heterodimer of HisH and HisF.

The protein localises to the cytoplasm. The enzyme catalyses 5-[(5-phospho-1-deoxy-D-ribulos-1-ylimino)methylamino]-1-(5-phospho-beta-D-ribosyl)imidazole-4-carboxamide + L-glutamine = D-erythro-1-(imidazol-4-yl)glycerol 3-phosphate + 5-amino-1-(5-phospho-beta-D-ribosyl)imidazole-4-carboxamide + L-glutamate + H(+). The catalysed reaction is L-glutamine + H2O = L-glutamate + NH4(+). Its pathway is amino-acid biosynthesis; L-histidine biosynthesis; L-histidine from 5-phospho-alpha-D-ribose 1-diphosphate: step 5/9. Functionally, IGPS catalyzes the conversion of PRFAR and glutamine to IGP, AICAR and glutamate. The HisH subunit catalyzes the hydrolysis of glutamine to glutamate and ammonia as part of the synthesis of IGP and AICAR. The resulting ammonia molecule is channeled to the active site of HisF. In Methylococcus capsulatus (strain ATCC 33009 / NCIMB 11132 / Bath), this protein is Imidazole glycerol phosphate synthase subunit HisH.